The sequence spans 179 residues: Large ribosomal subunit protein uL5 (179 aa).

This sequence belongs to the universal ribosomal protein uL5 family. In terms of assembly, part of the 50S ribosomal subunit; part of the 5S rRNA/L5/L18/L25 subcomplex. Contacts the 5S rRNA and the P site tRNA. Forms a bridge to the 30S subunit in the 70S ribosome.

In terms of biological role, this is one of the proteins that bind and probably mediate the attachment of the 5S RNA into the large ribosomal subunit, where it forms part of the central protuberance. In the 70S ribosome it contacts protein S13 of the 30S subunit (bridge B1b), connecting the 2 subunits; this bridge is implicated in subunit movement. Contacts the P site tRNA; the 5S rRNA and some of its associated proteins might help stabilize positioning of ribosome-bound tRNAs. The sequence is that of Large ribosomal subunit protein uL5 from Bordetella petrii (strain ATCC BAA-461 / DSM 12804 / CCUG 43448).